Reading from the N-terminus, the 143-residue chain is Nucleoside diphosphate kinase (143 aa).

6 residues coordinate ATP: K11, F59, R87, T93, R104, and N114. Residue H117 is the Pros-phosphohistidine intermediate of the active site.

The protein belongs to the NDK family. Homotetramer. Mg(2+) is required as a cofactor.

It is found in the cytoplasm. It catalyses the reaction a 2'-deoxyribonucleoside 5'-diphosphate + ATP = a 2'-deoxyribonucleoside 5'-triphosphate + ADP. The catalysed reaction is a ribonucleoside 5'-diphosphate + ATP = a ribonucleoside 5'-triphosphate + ADP. Its function is as follows. Major role in the synthesis of nucleoside triphosphates other than ATP. The ATP gamma phosphate is transferred to the NDP beta phosphate via a ping-pong mechanism, using a phosphorylated active-site intermediate. The chain is Nucleoside diphosphate kinase from Shewanella woodyi (strain ATCC 51908 / MS32).